We begin with the raw amino-acid sequence, 689 residues long: Glycine--tRNA ligase beta subunit (689 aa).

Belongs to the class-II aminoacyl-tRNA synthetase family. Tetramer of two alpha and two beta subunits.

Its subcellular location is the cytoplasm. The catalysed reaction is tRNA(Gly) + glycine + ATP = glycyl-tRNA(Gly) + AMP + diphosphate. This chain is Glycine--tRNA ligase beta subunit, found in Salmonella agona (strain SL483).